The following is a 117-amino-acid chain: UPF0102 protein Rsph17025_0472 (117 aa).

Belongs to the UPF0102 family.

This is UPF0102 protein Rsph17025_0472 from Cereibacter sphaeroides (strain ATCC 17025 / ATH 2.4.3) (Rhodobacter sphaeroides).